The chain runs to 438 residues: Glutamate-1-semialdehyde 2,1-aminomutase (438 aa).

An N6-(pyridoxal phosphate)lysine modification is found at lysine 278.

The protein belongs to the class-III pyridoxal-phosphate-dependent aminotransferase family. HemL subfamily. In terms of assembly, homodimer. Pyridoxal 5'-phosphate is required as a cofactor.

The protein resides in the cytoplasm. It catalyses the reaction (S)-4-amino-5-oxopentanoate = 5-aminolevulinate. It functions in the pathway porphyrin-containing compound metabolism; protoporphyrin-IX biosynthesis; 5-aminolevulinate from L-glutamyl-tRNA(Glu): step 2/2. The polypeptide is Glutamate-1-semialdehyde 2,1-aminomutase (Delftia acidovorans (strain DSM 14801 / SPH-1)).